A 1234-amino-acid polypeptide reads, in one-letter code: PAN2-PAN3 deadenylation complex catalytic subunit PAN2 (1234 aa).

Residues Leu12–Val32 form a disordered region. Residues Asn14 to Asn30 show a composition bias toward low complexity. 3 WD repeats span residues Asn176–Thr213, Ala272–Ala315, and Gln342–Lys381. Residues Pro323–His346 form a disordered region. The segment covering Gln333–Gln344 has biased composition (low complexity). The tract at residues Phe383–Glu537 is linker. The USP domain occupies Lys538 to Val946. The disordered stretch occupies residues Pro751–Asn775. Positions Gln754–Gln772 are enriched in low complexity. The a divalent metal cation site is built by Asp1004, Glu1006, Asp1138, and Asp1191. One can recognise an Exonuclease domain in the interval Gly1072–Tyr1199.

This sequence belongs to the peptidase C19 family. PAN2 subfamily. In terms of assembly, forms a heterotrimer with an asymmetric homodimer of the regulatory subunit PAN3 to form the poly(A)-nuclease (PAN) deadenylation complex. The cofactor is a divalent metal cation.

It is found in the cytoplasm. The catalysed reaction is Exonucleolytic cleavage of poly(A) to 5'-AMP.. Its activity is regulated as follows. Positively regulated by the regulatory subunit PAN3. Functionally, catalytic subunit of the poly(A)-nuclease (PAN) deadenylation complex, one of two cytoplasmic mRNA deadenylases involved in mRNA turnover. PAN specifically shortens poly(A) tails of RNA and the activity is stimulated by poly(A)-binding protein PAB1. PAN deadenylation is followed by rapid degradation of the shortened mRNA tails by the CCR4-NOT complex. Deadenylated mRNAs are then degraded by two alternative mechanisms, namely exosome-mediated 3'-5' exonucleolytic degradation, or deadenylation-dependent mRNA decaping and subsequent 5'-3' exonucleolytic degradation by XRN1. May also be involved in post-transcriptional maturation of mRNA poly(A) tails. The sequence is that of PAN2-PAN3 deadenylation complex catalytic subunit PAN2 from Lodderomyces elongisporus (strain ATCC 11503 / CBS 2605 / JCM 1781 / NBRC 1676 / NRRL YB-4239) (Yeast).